A 424-amino-acid chain; its full sequence is 3-ketoacyl-CoA thiolase, peroxisomal (424 aa).

A peroxisome-targeting transit peptide spans 1–26 (MQRLQVVLGHLRGPADSGWMPQAAPC). Positions 1-26 (MQRLQVVLGHLRGPADSGWMPQAAPC) are PTS2-type peroxisomal targeting signal. Phosphothreonine occurs at positions 59 and 60. Cys123 acts as the Acyl-thioester intermediate in catalysis. Residues His377 and Cys408 each act as proton acceptor in the active site.

Belongs to the thiolase-like superfamily. Thiolase family. Homodimer. Interacts (via PTS2-type peroxisomal targeting signal region) with PEX7; leading to its translocation into peroxisomes.

It is found in the peroxisome. The catalysed reaction is an acyl-CoA + acetyl-CoA = a 3-oxoacyl-CoA + CoA. It catalyses the reaction 2 acetyl-CoA = acetoacetyl-CoA + CoA. The enzyme catalyses tetradecanoyl-CoA + acetyl-CoA = 3-oxohexadecanoyl-CoA + CoA. It carries out the reaction hexanoyl-CoA + acetyl-CoA = 3-oxooctanoyl-CoA + CoA. The catalysed reaction is 3-oxohexadecanedioyl-CoA + CoA = tetradecanedioyl-CoA + acetyl-CoA. It catalyses the reaction 3-oxo-(6Z,9Z,12Z,15Z,18Z,21Z)-tetracosahexaenoyl-CoA + CoA = (4Z,7Z,10Z,13Z,16Z,19Z)-docosahexaenoyl-CoA + acetyl-CoA. The protein operates within lipid metabolism; peroxisomal fatty acid beta-oxidation. Functionally, responsible for the thiolytic cleavage of straight chain 3-keto fatty acyl-CoAs (3-oxoacyl-CoAs). Plays an important role in fatty acid peroxisomal beta-oxidation. Catalyzes the cleavage of short, medium, long, and very long straight chain 3-oxoacyl-CoAs. This chain is 3-ketoacyl-CoA thiolase, peroxisomal, found in Homo sapiens (Human).